Consider the following 723-residue polypeptide: MPWWPWRRWRRWRRRRGNWRRRVAPRRYRRTARRARRRRKAVRRRRRRRVRRRGYYRRYRRRRRYKRRLLILKQWQPTTNLRLTVKGLIPVVVMGKGKTQNNFGQWEQTVPLEGESYGGSFTIRKFTLQTLYEDYLKLRNRWSRSNTDLELIRYTGLNLRLYRHEFSDYIVHYSLETPMEVGLESHMLAHPLKMIMSSKHVTVPSLLTKKGGRRYLRLKIPPPKLMMTQWYFQKEFCQVGLVLLSISTATLMHPWMAPFVNSPALTIYAVNHKTYSDMSILPSNNQGSTKNELIETLYTAEHTYNPMAQRIWGNIKPQNTNFTPENYWNKWNEIHTKIKTNRQSELTQLKQMRKRLELTTENDYQDPNFGLSYGLYSPLLLYPEMYFPEQSKVYQKARYNPLLDQGIGNVVWTEPLTKKTCDYASQAYNVIKDAPLYLALFGYIDICSKLAKDKSFYLSNRVCVKCPYTVPQLLSKTNATLGHVILSENFMRGLVPSKDSYVPLYMRGKWYPSIYHQEEVIEAIVSSGPFVPRDQITKSLDITIGCRFGFRIGGNLLNPKQVGDPCKQPTHPLPAPGGGDLLRAVQVSDPRKVGIQFHPWDLRRGMLSTSSIKRMLQDSDDDESIEFPPKAWPGDPVPVGRTLEERCSSSLYHLLQEQATPPPFKKPRTEDQEENPEETTQLQLFQELQRQRELQLQLKRGFRGLVEEMIKSHRHLALDPYLK.

Positions 658 to 679 (QATPPPFKKPRTEDQEENPEET) are disordered.

It belongs to the anelloviridae capsid protein family.

It is found in the virion. Self assemble to form an icosahedral capsid. This Torque teno virus (isolate Japanese macaque/Japan/Mf-TTV9/2000) (TTV) protein is Capsid protein.